The chain runs to 654 residues: tRNA 5-methylaminomethyl-2-thiouridine biosynthesis bifunctional protein MnmC (654 aa).

Positions 1–235 (MSDFQHAQLD…KREMLGGTYQ (235 aa)) are tRNA (mnm(5)s(2)U34)-methyltransferase. The tract at residues 261 to 654 (VGGGLAGCAS…LRDLVRGQRG (394 aa)) is FAD-dependent cmnm(5)s(2)U34 oxidoreductase.

In the N-terminal section; belongs to the methyltransferase superfamily. tRNA (mnm(5)s(2)U34)-methyltransferase family. It in the C-terminal section; belongs to the DAO family. FAD is required as a cofactor.

The protein resides in the cytoplasm. It carries out the reaction 5-aminomethyl-2-thiouridine(34) in tRNA + S-adenosyl-L-methionine = 5-methylaminomethyl-2-thiouridine(34) in tRNA + S-adenosyl-L-homocysteine + H(+). Functionally, catalyzes the last two steps in the biosynthesis of 5-methylaminomethyl-2-thiouridine (mnm(5)s(2)U) at the wobble position (U34) in tRNA. Catalyzes the FAD-dependent demodification of cmnm(5)s(2)U34 to nm(5)s(2)U34, followed by the transfer of a methyl group from S-adenosyl-L-methionine to nm(5)s(2)U34, to form mnm(5)s(2)U34. This is tRNA 5-methylaminomethyl-2-thiouridine biosynthesis bifunctional protein MnmC from Pseudomonas paraeruginosa (strain DSM 24068 / PA7) (Pseudomonas aeruginosa (strain PA7)).